A 499-amino-acid chain; its full sequence is Zinc finger protein PLAG1 (499 aa).

The disordered stretch occupies residues 1–33 (MATVIPGDLSEVRDTQKAPSGKRKRGESKPRKN). An interaction with KPNA2 region spans residues 2 to 84 (ATVIPGDLSE…SKYKLQRHMA (83 aa)). The Nuclear localization signal signature appears at 22-25 (KRKR). 7 consecutive C2H2-type zinc fingers follow at residues 34–56 (FPCQ…SFSH), 62–86 (YKCT…MATH), 92–114 (HKCN…LHTH), 121–143 (FKCE…LALH), 150–172 (LTCK…LKSH), 185–207 (HQCE…MVVH), and 213–236 (FLCQ…KKSH). The decreased nuclear import with localization in the nucleus but also in the cytoplasm stretch occupies residues 41–242 (KAFNSVEKLK…KKSHNQELLK (202 aa)). The repression domain; contains 3 sumoylation motifs and massively decrease transcription activity stretch occupies residues 243–383 (VKTEPVDFLD…SPASSSKLGL (141 aa)). The segment at 243 to 499 (VKTEPVDFLD…TLPRFHQAFQ (257 aa)) is activates transcription; Inhibition of nuclear import due to lack of NLS and KPNA2 interaction. Residues Lys244 and Lys263 each participate in a glycyl lysine isopeptide (Lys-Gly) (interchain with G-Cter in SUMO) cross-link. Residues 365–379 (GGAPSSSQDSPASSS) show a composition bias toward low complexity. A disordered region spans residues 365–400 (GGAPSSSQDSPASSSKLGLEPQSGSPDDGAGDLSLS). Positions 384-499 (EPQSGSPDDG…TLPRFHQAFQ (116 aa)) are massively activates transcription.

It belongs to the krueppel C2H2-type zinc-finger protein family. In terms of assembly, interacts with KPNA2, which escorts protein to the nucleus via interaction with nuclear localization signal. Interacts with E3 SUMO-protein ligase PIAS1, PIAS2 and PIAS4. In terms of processing, sumoylated with SUMO1; which inhibits transcriptional activity, but does not affect nuclear localization. Blockers of sumoylation pathway such as SENP3 and inactive UBE2I increases transcriptional capacity. Sumoylation is increased in the presence of PIAS1. Acetylated by lysine acetyltransferase EP300; which activates transcriptional capacity. Lysine residues that are sumoylated also seem to be target for acetylation. Expressed in heart, spleen, lung, kidney, brain, testis and epididymis but not in salivary glands.

It localises to the nucleus. Functionally, transcription factor whose activation results in up-regulation of target genes, such as IGFII, leading to uncontrolled cell proliferation: when overexpressed in cultured cells, higher proliferation rate and transformation are observed. Other target genes such as CRLF1, CRABP2, CRIP2, PIGF are strongly induced in cells with PLAG1 induction. Proto-oncogene whose ectopic expression can trigger the development of pleomorphic adenomas of the salivary gland and lipoblastomas. Cooperates with CBFB-MYH11. The polypeptide is Zinc finger protein PLAG1 (Plag1) (Mus musculus (Mouse)).